The sequence spans 463 residues: Cysteine--tRNA ligase (463 aa).

Residue Cys-27 participates in Zn(2+) binding. The 'HIGH' region signature appears at 29 to 39; the sequence is PTVYGLIHIGN. Cys-207, His-232, and Glu-236 together coordinate Zn(2+). The 'KMSKS' region signature appears at 264–268; sequence KMSKS. Lys-267 serves as a coordination point for ATP.

The protein belongs to the class-I aminoacyl-tRNA synthetase family. As to quaternary structure, monomer. Zn(2+) is required as a cofactor.

Its subcellular location is the cytoplasm. It carries out the reaction tRNA(Cys) + L-cysteine + ATP = L-cysteinyl-tRNA(Cys) + AMP + diphosphate. The protein is Cysteine--tRNA ligase of Pseudothermotoga lettingae (strain ATCC BAA-301 / DSM 14385 / NBRC 107922 / TMO) (Thermotoga lettingae).